Here is a 1935-residue protein sequence, read N- to C-terminus: Rho GTPase-activating protein 21 (1935 aa).

The tract at residues 1–46 (MATRRATVPEQQQQQPSSPGSEISKNKDGQEQSEMVSPTEEEGFCW) is disordered. The PDZ domain occupies 78–163 (HTTVKDEENG…TLELSVMPKD (86 aa)). 5 disordered regions span residues 212–237 (VEVPPSGTSLTKQQSSRPVRTATTQP), 339–373 (PPSYGGHSESMFSTRPSQAEESPSPTNHYASPGSH), 413–456 (QNTT…QERL), 673–718 (TSTS…DSNS), and 862–919 (NSKT…DVFS). Polar residues-rich tracts occupy residues 217–237 (SGTSLTKQQSSRPVRTATTQP), 348–373 (SMFSTRPSQAEESPSPTNHYASPGSH), and 413–429 (QNTTDYDQMLPNRSSGQ). 2 stretches are compositionally biased toward low complexity: residues 441–451 (PQSVQMRQRSV) and 673–685 (TSTSASSSSPAHT). Over residues 708-718 (SPEANAGDSNS) the composition is skewed to polar residues. Residues 863–884 (SKTERSKSCDEGLDDYKDEGKL) show a composition bias toward basic and acidic residues. The 114-residue stretch at 920–1033 (DSNKEGFLYF…WIKAIQENGN (114 aa)) folds into the PH domain. A disordered region spans residues 1056 to 1126 (TMMSSSSNKS…KGSWRRIMKK (71 aa)). Low complexity predominate over residues 1059–1072 (SSSSNKSEQSPKPS). The segment covering 1097–1119 (PKQESERRLFSKDDISPPKDKGS) has biased composition (basic and acidic residues). One can recognise a Rho-GAP domain in the interval 1140–1332 (VRLDDCPPAH…TLIQQHDWFF (193 aa)). Disordered stretches follow at residues 1341–1393 (ITAV…GSGK), 1411–1431 (RKRKKQRDKPQPSSSEDELDN), 1488–1510 (SEATSPCPPKLSEPPIVNHRLPP), 1525–1548 (SMSDSGTMLSTSSQASAQRSKPKV), 1637–1665 (HRSKVEEPTRNVQVNSEGSPSCTEGSITP), 1688–1733 (SIRQ…EPEE), and 1838–1925 (SELS…SGTQ). Polar residues predominate over residues 1345–1355 (QEESTVESQPV). Residues 1376-1393 (SDSASDSAKSKGSWGSGK) are compositionally biased toward low complexity. 2 stretches are compositionally biased toward polar residues: residues 1525–1543 (SMSDSGTMLSTSSQASAQR) and 1646–1662 (RNVQVNSEGSPSCTEGS). Over residues 1691–1705 (QKTDSECSAESKNEE) the composition is skewed to basic and acidic residues. Composition is skewed to polar residues over residues 1872-1889 (QVSTAIVTAGSESPSQGT) and 1898-1911 (NGDSFQSKNKNNFS).

Its subcellular location is the golgi apparatus membrane. The protein localises to the cell junction. The protein resides in the cytoplasmic vesicle membrane. It is found in the cytoplasm. It localises to the cytoskeleton. Functionally, GTPase-activating protein (GAP) for rhoa and cdc42. This is Rho GTPase-activating protein 21 (arhgap21) from Xenopus tropicalis (Western clawed frog).